We begin with the raw amino-acid sequence, 202 residues long: Endothelin-1 (202 aa).

The N-terminal stretch at 1–23 (MDYFSMMVSLLLVAFHGAPETAA) is a signal peptide. The tract at residues 24 to 49 (SGTELSTGAENPGEKPPASAPWRPRR) is disordered. A propeptide spanning residues 24-50 (SGTELSTGAENPGEKPPASAPWRPRRS) is cleaved from the precursor. 2 disulfide bridges follow: Cys-53-Cys-67 and Cys-55-Cys-63. Residues 74–202 (VNTPGHIVPY…EQKVTHNRTH (129 aa)) constitute a propeptide that is removed on maturation. The tract at residues 110-124 (CQCTSPHDKKCWNFC) is endothelin-like.

This sequence belongs to the endothelin/sarafotoxin family.

The protein resides in the secreted. In terms of biological role, endothelins are endothelium-derived vasoconstrictor peptides. Probable ligand for G-protein coupled receptors EDNRA and EDNRB which activates PTK2B, BCAR1, BCAR3 and, GTPases RAP1 and RHOA cascade in glomerular mesangial cells. Also binds the DEAR/FBXW7-AS1 receptor. Promotes mesenteric arterial wall remodeling via activation of ROCK signaling and subsequent colocalization of NFATC3 with F-actin filaments. NFATC3 then translocates to the nucleus where it subsequently promotes the transcription of the smooth muscle hypertrophy and differentiation marker ACTA2. This Oryctolagus cuniculus (Rabbit) protein is Endothelin-1 (EDN1).